The chain runs to 753 residues: LIM domain and actin-binding protein 1 (753 aa).

Methionine 1 is modified (N-acetylmethionine). The residue at position 15 (serine 15) is a Phosphoserine. Basic and acidic residues predominate over residues 46 to 56 (EEANMERKKNN). Disordered regions lie at residues 46–66 (EEANMERKKNNPESLPQHFRR) and 82–186 (GAEF…TSGK). The residue at position 132 (serine 132) is a Phosphoserine. Over residues 143–152 (PRSENSHDFK) the composition is skewed to basic and acidic residues. Positions 164–166 (CLG) match the Required for interaction with NPC1L1 motif. Residues 167–177 (DSRHEAEKPET) show a composition bias toward basic and acidic residues. Residues serine 225, serine 230, serine 242, and serine 263 each carry the phosphoserine modification. Disordered regions lie at residues 276-326 (AAVS…VSTT) and 341-379 (TCNSQVKSEAQQPMHPKPLSPDARTSSLPESSPSKTAKK). A compositionally biased stretch (polar residues) spans 278–291 (VSKQSSPASYTNEL). Residues 292–305 (KTSESKTHKWEQKE) are compositionally biased toward basic and acidic residues. The segment covering 342–351 (CNSQVKSEAQ) has biased composition (polar residues). Residues serine 348, serine 360, serine 367, and serine 372 each carry the phosphoserine modification. The segment covering 363-375 (ARTSSLPESSPSK) has biased composition (polar residues). Residues 386–446 (ESCVECQKTV…KPHFNQLFKS (61 aa)) form the LIM zinc-binding domain. Lysine 437 bears the N6-succinyllysine mark. Residues serine 467, serine 485, and serine 488 each carry the phosphoserine modification. Disordered stretches follow at residues 467–493 (SDNEETLGRPAQPPNAGESPHSPGVED), 505–669 (SMEA…FELE), and 682–703 (EDDNHVHAQQSPLEPEAPGWSG). Residues 491–511 (VEDAPIAKVGVLAASMEAKAS) are required for interaction with MYO5B. 2 stretches are compositionally biased toward basic and acidic residues: residues 512 to 525 (SQREREDKPAETKK) and 554 to 565 (WPPEDDVCKTEA). A compositionally biased stretch (low complexity) spans 598 to 609 (SSIKSPKASSPS). Serine 599, serine 602, serine 607, and serine 615 each carry phosphoserine. Over residues 630–666 (MERKQTENARPSGEKENVGKSRWQGEEVPRSKDRSSF) the composition is skewed to basic and acidic residues. Phosphoserine is present on residues serine 692, serine 720, and serine 735.

As to quaternary structure, interacts with NPC1L1; bridges NPC1L1 with MYO5B. Interacts with MYO5B; bridges MYO5B with NPC1L1. Interacts with PXN; this complex stabilizes actin dynamics. Binds to G-actin and F-actin. Interacts with LUZP1 (via C-terminus); both proteins restrict ciliation and may work together to regulate this process. Binds RAB40B (GTP-bound); interaction influences LIMA1 subcellular localization in lamellipodia during cell migration. Phosphorylation of the C-terminal region by MAPK1/MAPK3 reduces its association with F-actin and contributes to actin filament reorganization and enhances cell motility. Post-translationally, ubiquitinated by the ECS(RAB40B) complex leading to its degradation. In terms of tissue distribution, highly expressed in the small intestine, including the duodenum, jejunum, and ileum. Low expression in the liver and very low expressed in the heart, spleen, lung, brain, and pancreas. Isoform Alpha is highly expressed in embryos from day 7-11 and in adult spleen and lung. Isoform Beta expression is highest in adult kidney, testis, lung and liver, intermediate in heart, brain, spleen, skeletal muscle and low in embryos.

The protein localises to the cytoplasm. Its subcellular location is the cell junction. The protein resides in the focal adhesion. It localises to the cytoskeleton. It is found in the stress fiber. The protein localises to the cell membrane. Its subcellular location is the cell projection. The protein resides in the ruffle. It localises to the lamellipodium. In terms of biological role, actin-binding protein involved in actin cytoskeleton regulation and dynamics. Increases the number and size of actin stress fibers and inhibits membrane ruffling. Inhibits actin filament depolymerization. Bundles actin filaments, delays filament nucleation and reduces formation of branched filaments. Acts as a negative regulator of primary cilium formation. Plays a role in cholesterol homeostasis. Influences plasma cholesterol levels through regulation of intestinal cholesterol absorption. May act as a scaffold protein by regulating NPC1L1 transportation, an essential protein for cholesterol absorption, to the plasma membrane by recruiting MYO5B to NPC1L1, and thus facilitates cholesterol uptake. The sequence is that of LIM domain and actin-binding protein 1 (Lima1) from Mus musculus (Mouse).